An 810-amino-acid chain; its full sequence is Valine--tRNA ligase (810 aa).

The 'HIGH' region motif lies at 45-55 (PTISGQLHIGH). The 'KMSKS' region motif lies at 534 to 538 (KMSKS). Lysine 537 provides a ligand contact to ATP.

This sequence belongs to the class-I aminoacyl-tRNA synthetase family. ValS type 2 subfamily. As to quaternary structure, monomer.

The protein resides in the cytoplasm. The enzyme catalyses tRNA(Val) + L-valine + ATP = L-valyl-tRNA(Val) + AMP + diphosphate. Functionally, catalyzes the attachment of valine to tRNA(Val). As ValRS can inadvertently accommodate and process structurally similar amino acids such as threonine, to avoid such errors, it has a 'posttransfer' editing activity that hydrolyzes mischarged Thr-tRNA(Val) in a tRNA-dependent manner. This is Valine--tRNA ligase from Ehrlichia ruminantium (strain Welgevonden).